The sequence spans 845 residues: Molybdenum cofactor sulfurase (845 aa).

N6-(pyridoxal phosphate)lysine is present on Lys-240. The active site involves Cys-404. The 175-residue stretch at 666-840 (SFPQDSSPSS…LMVGDTVTPS (175 aa)) folds into the MOSC domain.

The protein belongs to the class-V pyridoxal-phosphate-dependent aminotransferase family. MOCOS subfamily. Requires pyridoxal 5'-phosphate as cofactor.

The catalysed reaction is Mo-molybdopterin + L-cysteine + AH2 = thio-Mo-molybdopterin + L-alanine + A + H2O. The protein operates within cofactor biosynthesis; molybdopterin biosynthesis. Sulfurates the molybdenum cofactor. Sulfation of molybdenum is essential for xanthine dehydrogenase (XDH) and aldehyde oxidase (ADO) enzymes in which molybdenum cofactor is liganded by 1 oxygen and 1 sulfur atom in active form. The polypeptide is Molybdenum cofactor sulfurase (Aspergillus clavatus (strain ATCC 1007 / CBS 513.65 / DSM 816 / NCTC 3887 / NRRL 1 / QM 1276 / 107)).